The following is a 290-amino-acid chain: Polyamine aminopropyltransferase (290 aa).

One can recognise a PABS domain in the interval Gln-5 to Glu-238. S-methyl-5'-thioadenosine is bound at residue Gln-33. Spermidine contacts are provided by His-64 and Asp-88. S-methyl-5'-thioadenosine contacts are provided by residues Glu-108 and Asp-140–Gly-141. Asp-158 acts as the Proton acceptor in catalysis. Residue Asp-158 to Asp-161 coordinates spermidine. Residue Pro-165 participates in S-methyl-5'-thioadenosine binding.

It belongs to the spermidine/spermine synthase family. Homodimer or homotetramer.

Its subcellular location is the cytoplasm. The enzyme catalyses S-adenosyl 3-(methylsulfanyl)propylamine + putrescine = S-methyl-5'-thioadenosine + spermidine + H(+). Its pathway is amine and polyamine biosynthesis; spermidine biosynthesis; spermidine from putrescine: step 1/1. In terms of biological role, catalyzes the irreversible transfer of a propylamine group from the amino donor S-adenosylmethioninamine (decarboxy-AdoMet) to putrescine (1,4-diaminobutane) to yield spermidine. This Hamiltonella defensa subsp. Acyrthosiphon pisum (strain 5AT) protein is Polyamine aminopropyltransferase.